Consider the following 563-residue polypeptide: CTP synthase (563 aa).

The amidoligase domain stretch occupies residues 1–280 (MTKFVFVTGG…DEMICMKLQL (280 aa)). Ser13 provides a ligand contact to CTP. A UTP-binding site is contributed by Ser13. Residues 14-19 (SLGKGI) and Asp71 each bind ATP. Asp71 and Glu154 together coordinate Mg(2+). CTP-binding positions include 161 to 163 (DIE), 201 to 206 (KTKPTQ), and Lys237. UTP-binding positions include 201–206 (KTKPTQ) and Lys237. In terms of domain architecture, Glutamine amidotransferase type-1 spans 305 to 557 (TIAMAGKYTE…IAAALEHHAA (253 aa)). Gly366 serves as a coordination point for L-glutamine. Cys393 serves as the catalytic Nucleophile; for glutamine hydrolysis. L-glutamine-binding positions include 394-397 (LGMQ), Glu417, and Arg483. Active-site residues include His530 and Glu532.

The protein belongs to the CTP synthase family. Homotetramer.

The catalysed reaction is UTP + L-glutamine + ATP + H2O = CTP + L-glutamate + ADP + phosphate + 2 H(+). It catalyses the reaction L-glutamine + H2O = L-glutamate + NH4(+). It carries out the reaction UTP + NH4(+) + ATP = CTP + ADP + phosphate + 2 H(+). It participates in pyrimidine metabolism; CTP biosynthesis via de novo pathway; CTP from UDP: step 2/2. With respect to regulation, allosterically activated by GTP, when glutamine is the substrate; GTP has no effect on the reaction when ammonia is the substrate. The allosteric effector GTP functions by stabilizing the protein conformation that binds the tetrahedral intermediate(s) formed during glutamine hydrolysis. Inhibited by the product CTP, via allosteric rather than competitive inhibition. In terms of biological role, catalyzes the ATP-dependent amination of UTP to CTP with either L-glutamine or ammonia as the source of nitrogen. Regulates intracellular CTP levels through interactions with the four ribonucleotide triphosphates. The polypeptide is CTP synthase (Leptothrix cholodnii (strain ATCC 51168 / LMG 8142 / SP-6) (Leptothrix discophora (strain SP-6))).